Here is a 560-residue protein sequence, read N- to C-terminus: Endogenous retrovirus group K member 18 Env polyprotein (560 aa).

The tract at residues 355 to 375 is fusion peptide; sequence FIFTLIAVIMGLIAVTATAAV. A helical transmembrane segment spans residues 522–542; the sequence is IRSTMIINLILIVVCLFCLLL.

Belongs to the beta type-B retroviral envelope protein family. HERV class-II K(HML-2) env subfamily. As to quaternary structure, the surface (SU) and transmembrane (TM) proteins form a heterodimer. SU and TM are attached by noncovalent interactions or by a labile interchain disulfide bond. Specific enzymatic cleavages in vivo yield the mature SU and TM proteins. In terms of tissue distribution, expressed at higher level in the thymus. Expressed at lower level in peripheral blood lymphocytes.

Its subcellular location is the cell membrane. The protein localises to the virion. Retroviral envelope proteins mediate receptor recognition and membrane fusion during early infection. Endogenous envelope proteins may have kept, lost or modified their original function during evolution. This envelope protein has superantigenic properties. In terms of biological role, SU mediates receptor recognition. Functionally, TM anchors the envelope heterodimer to the viral membrane through one transmembrane domain. The other hydrophobic domain, called fusion peptide, mediates fusion of the viral membrane with the target cell membrane. In Homo sapiens (Human), this protein is Endogenous retrovirus group K member 18 Env polyprotein (ERVK-18).